Here is a 413-residue protein sequence, read N- to C-terminus: Multifunctional CCA protein (413 aa).

Positions 8 and 11 each coordinate ATP. CTP-binding residues include Gly8 and Arg11. Positions 21 and 23 each coordinate Mg(2+). ATP contacts are provided by Arg91, Arg137, and Arg140. Residues Arg91, Arg137, and Arg140 each coordinate CTP. The 102-residue stretch at 228–329 (TGIHTLMTLS…VKLFDNIDAW (102 aa)) folds into the HD domain.

The protein belongs to the tRNA nucleotidyltransferase/poly(A) polymerase family. Bacterial CCA-adding enzyme type 1 subfamily. Monomer. Can also form homodimers and oligomers. Requires Mg(2+) as cofactor. The cofactor is Ni(2+).

The enzyme catalyses a tRNA precursor + 2 CTP + ATP = a tRNA with a 3' CCA end + 3 diphosphate. It catalyses the reaction a tRNA with a 3' CCA end + 2 CTP + ATP = a tRNA with a 3' CCACCA end + 3 diphosphate. In terms of biological role, catalyzes the addition and repair of the essential 3'-terminal CCA sequence in tRNAs without using a nucleic acid template. Adds these three nucleotides in the order of C, C, and A to the tRNA nucleotide-73, using CTP and ATP as substrates and producing inorganic pyrophosphate. tRNA 3'-terminal CCA addition is required both for tRNA processing and repair. Also involved in tRNA surveillance by mediating tandem CCA addition to generate a CCACCA at the 3' terminus of unstable tRNAs. While stable tRNAs receive only 3'-terminal CCA, unstable tRNAs are marked with CCACCA and rapidly degraded. This is Multifunctional CCA protein from Enterobacter sp. (strain 638).